The primary structure comprises 173 residues: RNA pyrophosphohydrolase (173 aa).

A Nudix hydrolase domain is found at 11-164; that stretch reads PYRRSVGILV…KKHVYMKIVN (154 aa). The short motif at 52–73 is the Nudix box element; sequence GGIDENEEPLDAARRELYEETG.

Belongs to the Nudix hydrolase family. RppH subfamily. It depends on a divalent metal cation as a cofactor.

In terms of biological role, accelerates the degradation of transcripts by removing pyrophosphate from the 5'-end of triphosphorylated RNA, leading to a more labile monophosphorylated state that can stimulate subsequent ribonuclease cleavage. The polypeptide is RNA pyrophosphohydrolase (Bartonella henselae (strain ATCC 49882 / DSM 28221 / CCUG 30454 / Houston 1) (Rochalimaea henselae)).